Reading from the N-terminus, the 300-residue chain is Protoheme IX farnesyltransferase (300 aa).

Transmembrane regions (helical) follow at residues 24-44 (VTQLAVFCAVIGMFLATPGMV), 46-66 (WHVLIGGTIGIWLLAGAAFAI), 94-114 (PQILLFSAVLGSVGAWTLYTF), 118-138 (LTMWLTIATFVGYAVVYTLLL), 146-166 (IVIGGASGAMPPALGWAAVTG), 172-192 (AWILVLIIFVWTPPHFWVLAL), 224-244 (VILFAVTLMPFISGMSGVVYL), and 278-298 (IVYLSLLFAALLVDHYARPLL).

This sequence belongs to the UbiA prenyltransferase family. Protoheme IX farnesyltransferase subfamily.

The protein localises to the cell inner membrane. It carries out the reaction heme b + (2E,6E)-farnesyl diphosphate + H2O = Fe(II)-heme o + diphosphate. It participates in porphyrin-containing compound metabolism; heme O biosynthesis; heme O from protoheme: step 1/1. Its function is as follows. Converts heme B (protoheme IX) to heme O by substitution of the vinyl group on carbon 2 of heme B porphyrin ring with a hydroxyethyl farnesyl side group. This is Protoheme IX farnesyltransferase from Burkholderia ambifaria (strain ATCC BAA-244 / DSM 16087 / CCUG 44356 / LMG 19182 / AMMD) (Burkholderia cepacia (strain AMMD)).